Consider the following 344-residue polypeptide: ESARNPTIYPLTLPPALSSDPVIIGCLIHDYFPSGTMNVTWGKSGKDITTVNFPPALASGGRYTMSNQLTLPAVECPEGESVKCSVQHDSNPVQELDVNCSGPTPPPPITIPSCQPSLSLQRPALEDLLLGSDASITCTLNGLRNPEGAVFTWEPSTGKDAVQKKAVQNSCGCYSVSSVLPGCAERWNSGASFKCTVTHPESGTLTGTIAKVTVNTFPPQVHLLPPPSEELALNELLSLTCLVRAFNPKEVLVRWLHGNEELSPESYLVFEPLKEPGEGATTYLVTSVLRVSAETWKQGDQYSCMVGHEALPMNFTQKTIDRLSGKPTNVSVSVIMSEGDGICY.

Residues proline 6 to asparagine 99 form the Ig-like 1 domain. Disulfide bonds link cysteine 26-cysteine 84 and cysteine 76-cysteine 100. N-linked (GlcNAc...) asparagine glycans are attached at residues asparagine 38 and asparagine 99. A glycan (O-linked (GalNAc) serine; in variant MOPC 47A) is linked at serine 101. 2 disulfide bridges follow: cysteine 114-cysteine 171 and cysteine 138-cysteine 195. 2 Ig-like domains span residues proline 116–threonine 206 and proline 219–aspartate 321. The N-linked (GlcNAc...) asparagine glycan is linked to asparagine 329. Residue serine 331 is glycosylated (N-linked (GlcNAc...) asparagine; in variant M511).

Its function is as follows. Ig alpha is the major immunoglobulin class in body secretions. It may serve both to defend against local infection and to prevent access of foreign antigens to the general immunologic system. The protein is Ig alpha chain C region of Mus musculus (Mouse).